A 278-amino-acid polypeptide reads, in one-letter code: D-aminoacyl-tRNA deacylase (278 aa).

It belongs to the DtdA deacylase family. In terms of assembly, monomer. It depends on Zn(2+) as a cofactor.

It catalyses the reaction a D-aminoacyl-tRNA + H2O = a tRNA + a D-alpha-amino acid + H(+). The catalysed reaction is glycyl-tRNA(Ala) + H2O = tRNA(Ala) + glycine + H(+). Its function is as follows. D-aminoacyl-tRNA deacylase with broad substrate specificity. By recycling D-aminoacyl-tRNA to D-amino acids and free tRNA molecules, this enzyme counteracts the toxicity associated with the formation of D-aminoacyl-tRNA entities in vivo. This chain is D-aminoacyl-tRNA deacylase, found in Archaeoglobus fulgidus (strain ATCC 49558 / DSM 4304 / JCM 9628 / NBRC 100126 / VC-16).